The primary structure comprises 510 residues: MFIESFKVESPNVKYTENEIHSVYDYQTTELVHENKNGAFQWTVKPKTVKYEFKTDTHVPKLGVMLVGWGGNNGSTLTAGVIANREGISWATKEKVQQANYFGSLTQASSIRVGSFNGEEIYAPFKSLLPMVNPEEIVFGGWDISDMNLADAMARAKVLDIDLQKQMRPFMEHMVPLPGIFDPDFIAANQGSRANHVIKGTKKQQLEQVIKDIREFKEKNKVDKVVVLWTANTERYSNVVVGLNDTTENLMSSLDKDEAEISPSTLYAIACVLENVPFINGSPQNTFVPGLIELAIKRNCLIGGDDFKSGQTKMKSVLVDFLVGAGIKPTSIVSYNHLGNNDGMNLSAPQTFRSKEISKSNVVDDMVGSNGILYEPGEHPDHVVVIKYVPCVGDSKRAMDEYTSEIFMGGKNTIVMHNTCEDSLLAAPIILDLVLLAELTTRIQFMSENEGKFHSFHPVATLLSYLSKAPLVPPGTPVVNALSKQRAMLENVLRACVGLAPENNMILEYK.

Belongs to the myo-inositol 1-phosphate synthase family. Requires NAD(+) as cofactor. Expressed in siliques, leaves, roots, seed endosperm, but not in embryos. Highest expression in roots. Confined to vascular tissue and hydathodes of leaves.

It is found in the cytoplasm. The catalysed reaction is D-glucose 6-phosphate = 1D-myo-inositol 3-phosphate. It functions in the pathway polyol metabolism; myo-inositol biosynthesis; myo-inositol from D-glucose 6-phosphate: step 1/2. Functionally, key enzyme in myo-inositol biosynthesis pathway that catalyzes the conversion of glucose 6-phosphate to 1-myo-inositol 1-phosphate in a NAD-dependent manner. This Arabidopsis thaliana (Mouse-ear cress) protein is Probable inositol 3-phosphate synthase isozyme 3 (IPS3).